We begin with the raw amino-acid sequence, 1064 residues long: Carbamoyl phosphate synthase large chain (1064 aa).

Positions 1–401 (MPKRADIKKI…ALMKAIRSLE (401 aa)) are carboxyphosphate synthetic domain. ATP is bound by residues Arg129, Arg169, Gly175, Gly176, Lys208, Ile210, Glu215, Gly241, Ile242, His243, Gln284, and Glu298. Positions 133-327 (KQLMEALKEP…IAKMAAKIAI (195 aa)) constitute an ATP-grasp 1 domain. Residues Gln284, Glu298, and Asn300 each contribute to the Mg(2+) site. The Mn(2+) site is built by Gln284, Glu298, and Asn300. The oligomerization domain stretch occupies residues 402–546 (IGTFALDDLT…YSTYELENES (145 aa)). The tract at residues 547–929 (LKEKRPSVLV…ALYKAFVAAG (383 aa)) is carbamoyl phosphate synthetic domain. The ATP-grasp 2 domain maps to 671 to 861 (NQVIKKLDLS…LAQLATRVML (191 aa)). Arg707, Ser746, Leu748, Glu752, Gly777, Val778, His779, Ser780, Gln820, and Glu832 together coordinate ATP. Positions 820, 832, and 834 each coordinate Mg(2+). Mn(2+) is bound by residues Gln820, Glu832, and Asn834. Residues 930 to 1064 (FKVHEHGNVL…VSAINKGDKS (135 aa)) enclose the MGS-like domain. Residues 930–1064 (FKVHEHGNVL…VSAINKGDKS (135 aa)) are allosteric domain.

It belongs to the CarB family. In terms of assembly, composed of two chains; the small (or glutamine) chain promotes the hydrolysis of glutamine to ammonia, which is used by the large (or ammonia) chain to synthesize carbamoyl phosphate. Tetramer of heterodimers (alpha,beta)4. Requires Mg(2+) as cofactor. The cofactor is Mn(2+).

The enzyme catalyses hydrogencarbonate + L-glutamine + 2 ATP + H2O = carbamoyl phosphate + L-glutamate + 2 ADP + phosphate + 2 H(+). It catalyses the reaction hydrogencarbonate + NH4(+) + 2 ATP = carbamoyl phosphate + 2 ADP + phosphate + 2 H(+). The protein operates within amino-acid biosynthesis; L-arginine biosynthesis; carbamoyl phosphate from bicarbonate: step 1/1. It participates in pyrimidine metabolism; UMP biosynthesis via de novo pathway; (S)-dihydroorotate from bicarbonate: step 1/3. Its function is as follows. Large subunit of the glutamine-dependent carbamoyl phosphate synthetase (CPSase). CPSase catalyzes the formation of carbamoyl phosphate from the ammonia moiety of glutamine, carbonate, and phosphate donated by ATP, constituting the first step of 2 biosynthetic pathways, one leading to arginine and/or urea and the other to pyrimidine nucleotides. The large subunit (synthetase) binds the substrates ammonia (free or transferred from glutamine from the small subunit), hydrogencarbonate and ATP and carries out an ATP-coupled ligase reaction, activating hydrogencarbonate by forming carboxy phosphate which reacts with ammonia to form carbamoyl phosphate. This is Carbamoyl phosphate synthase large chain from Oenococcus oeni (strain ATCC BAA-331 / PSU-1).